The primary structure comprises 404 residues: Nesprin-4 (404 aa).

Disordered stretches follow at residues 1–91 and 277–347; these read MALS…GGKH and GQRG…GAPD. Residues 1-355 are Cytoplasmic-facing; that stretch reads MALSLPLGPR…PDPASRQPLT (355 aa). Residues 39 to 52 are compositionally biased toward polar residues; that stretch reads EESTSPEQAQTLGQ. Over residues 307-320 the composition is skewed to basic residues; that stretch reads HQKRLARHQRHSLL. The region spanning 347 to 404 is the KASH domain; it reads DPASRQPLTFLLILFLLFLLLVGAMFLLPASGGPCCSHARIPRTPYLVLSYVNGLPPV. The chain crosses the membrane as a helical; Anchor for type IV membrane protein span at residues 356–376; the sequence is FLLILFLLFLLLVGAMFLLPA. Residues 377–404 are Perinuclear space-facing; the sequence is SGGPCCSHARIPRTPYLVLSYVNGLPPV.

This sequence belongs to the nesprin family. As to quaternary structure, core component of LINC complexes which are composed of inner nuclear membrane SUN domain-containing proteins coupled to outer nuclear membrane KASH domain-containing nesprins. SUN and KASH domain-containing proteins seem to bind each other promiscuously; however, differentially expression of LINC complex constituents can give rise to specific assemblies. Probably part of a SUN1-containing LINC complex. Interacts with kinesins KIF5B and KLC1. Post-translationally, the disulfid bond with SUN1 or SUN2 is required for stability of the respective LINC complex under tensile forces.

The protein resides in the nucleus outer membrane. In terms of biological role, as a component of the LINC (LInker of Nucleoskeleton and Cytoskeleton) complex, involved in the connection between the nuclear lamina and the cytoskeleton. The nucleocytoplasmic interactions established by the LINC complex play an important role in the transmission of mechanical forces across the nuclear envelope and in nuclear movement and positioning. Behaves as a kinesin cargo, providing a functional binding site for kinesin-1 at the nuclear envelope. Hence may contribute to the establishment of secretory epithelial morphology by promoting kinesin-dependent apical migration of the centrosome and Golgi apparatus and basal localization of the nucleus. The polypeptide is Nesprin-4 (SYNE4) (Homo sapiens (Human)).